Here is a 183-residue protein sequence, read N- to C-terminus: Probable chemoreceptor glutamine deamidase CheD (183 aa).

Belongs to the CheD family.

The catalysed reaction is L-glutaminyl-[protein] + H2O = L-glutamyl-[protein] + NH4(+). Probably deamidates glutamine residues to glutamate on methyl-accepting chemotaxis receptors (MCPs), playing an important role in chemotaxis. The polypeptide is Probable chemoreceptor glutamine deamidase CheD (Zymomonas mobilis subsp. mobilis (strain ATCC 31821 / ZM4 / CP4)).